The following is a 358-amino-acid chain: Methylthioribose-1-phosphate isomerase (358 aa).

Substrate-binding positions include 54–56 (RGA), R96, and Q205. Residue D246 is the Proton donor of the active site. A substrate-binding site is contributed by 256 to 257 (NK).

This sequence belongs to the eIF-2B alpha/beta/delta subunits family. MtnA subfamily.

The enzyme catalyses 5-(methylsulfanyl)-alpha-D-ribose 1-phosphate = 5-(methylsulfanyl)-D-ribulose 1-phosphate. It participates in amino-acid biosynthesis; L-methionine biosynthesis via salvage pathway; L-methionine from S-methyl-5-thio-alpha-D-ribose 1-phosphate: step 1/6. Its function is as follows. Catalyzes the interconversion of methylthioribose-1-phosphate (MTR-1-P) into methylthioribulose-1-phosphate (MTRu-1-P). This chain is Methylthioribose-1-phosphate isomerase, found in Azotobacter vinelandii (strain DJ / ATCC BAA-1303).